A 120-amino-acid polypeptide reads, in one-letter code: NAD(P)H-quinone oxidoreductase subunit 3, chloroplastic (120 aa).

3 consecutive transmembrane segments (helical) span residues 14–34, 64–84, and 88–108; these read LIIS…LAPI, MFAL…PWAM, and ILGV…IVGL.

Belongs to the complex I subunit 3 family. In terms of assembly, NDH is composed of at least 16 different subunits, 5 of which are encoded in the nucleus.

The protein localises to the plastid. Its subcellular location is the chloroplast thylakoid membrane. The enzyme catalyses a plastoquinone + NADH + (n+1) H(+)(in) = a plastoquinol + NAD(+) + n H(+)(out). It carries out the reaction a plastoquinone + NADPH + (n+1) H(+)(in) = a plastoquinol + NADP(+) + n H(+)(out). In terms of biological role, NDH shuttles electrons from NAD(P)H:plastoquinone, via FMN and iron-sulfur (Fe-S) centers, to quinones in the photosynthetic chain and possibly in a chloroplast respiratory chain. The immediate electron acceptor for the enzyme in this species is believed to be plastoquinone. Couples the redox reaction to proton translocation, and thus conserves the redox energy in a proton gradient. This chain is NAD(P)H-quinone oxidoreductase subunit 3, chloroplastic, found in Coffea arabica (Arabian coffee).